The sequence spans 512 residues: Respiratory nitrate reductase 1 beta chain (512 aa).

4Fe-4S ferredoxin-type domains lie at 7 to 35 (VGMV…SREG), 175 to 206 (TFMM…KREE), and 208 to 237 (GIVL…FNWK). [4Fe-4S] cluster-binding residues include Cys16, Cys19, Cys22, Cys26, Cys184, Cys187, and Cys192. [3Fe-4S] cluster is bound by residues Cys196, Cys217, and Cys223. 5 residues coordinate [4Fe-4S] cluster: Cys227, Cys244, Cys247, Cys259, and Cys263.

Dimer of heterotrimers each composed of an alpha, a beta and a gamma chain. Alpha and beta are catalytic chains; gamma chains are involved in binding the enzyme complex to the cytoplasmic membrane. The cofactor is [4Fe-4S] cluster. Requires [3Fe-4S] cluster as cofactor.

It localises to the cell membrane. It carries out the reaction nitrate + a quinol = a quinone + nitrite + H2O. Its function is as follows. The nitrate reductase enzyme complex allows E.coli to use nitrate as an electron acceptor during anaerobic growth. The beta chain is an electron transfer unit containing four cysteine clusters involved in the formation of iron-sulfur centers. Electrons are transferred from the gamma chain to the molybdenum cofactor of the alpha subunit. This is Respiratory nitrate reductase 1 beta chain (narH) from Escherichia coli (strain K12).